Here is a 264-residue protein sequence, read N- to C-terminus: uncharacterized protein (264 aa).

His-7, His-9, Glu-102, His-138, His-163, and Asp-213 together coordinate a divalent metal cation.

Belongs to the metallo-dependent hydrolases superfamily. TatD-type hydrolase family. Requires a divalent metal cation as cofactor.

This is an uncharacterized protein from Buchnera aphidicola subsp. Acyrthosiphon pisum (strain APS) (Acyrthosiphon pisum symbiotic bacterium).